The following is a 388-amino-acid chain: Leucine aminopeptidase 1 (388 aa).

Positions 1–19 are cleaved as a signal peptide; the sequence is MKSLSLLALAAIAPPAAVA. The propeptide occupies 20-88; sequence AVVDHQVPFE…SVKSHERIQV (69 aa). A glycan (N-linked (GlcNAc...) asparagine) is linked at N180. Zn(2+) is bound by residues H188, D207, E246, and D273. C322 and C326 are joined by a disulfide. H355 is a Zn(2+) binding site.

Belongs to the peptidase M28 family. M28E subfamily. As to quaternary structure, monomer. Zn(2+) serves as cofactor.

The protein resides in the secreted. Extracellular aminopeptidase that allows assimilation of proteinaceous substrates. The sequence is that of Leucine aminopeptidase 1 (LAP1) from Coccidioides posadasii (strain RMSCC 757 / Silveira) (Valley fever fungus).